A 221-amino-acid chain; its full sequence is Thiopurine S-methyltransferase (221 aa).

Residues tryptophan 12, leucine 47, glutamate 68, and arginine 125 each coordinate S-adenosyl-L-methionine.

It belongs to the class I-like SAM-binding methyltransferase superfamily. TPMT family.

It is found in the cytoplasm. The enzyme catalyses S-adenosyl-L-methionine + a thiopurine = S-adenosyl-L-homocysteine + a thiopurine S-methylether.. This chain is Thiopurine S-methyltransferase, found in Legionella pneumophila subsp. pneumophila (strain Philadelphia 1 / ATCC 33152 / DSM 7513).